We begin with the raw amino-acid sequence, 104 residues long: Large ribosomal subunit protein uL24 (104 aa).

The protein belongs to the universal ribosomal protein uL24 family. In terms of assembly, part of the 50S ribosomal subunit.

One of two assembly initiator proteins, it binds directly to the 5'-end of the 23S rRNA, where it nucleates assembly of the 50S subunit. Its function is as follows. One of the proteins that surrounds the polypeptide exit tunnel on the outside of the subunit. This is Large ribosomal subunit protein uL24 from Saccharopolyspora erythraea (strain ATCC 11635 / DSM 40517 / JCM 4748 / NBRC 13426 / NCIMB 8594 / NRRL 2338).